Here is a 107-residue protein sequence, read N- to C-terminus: Protein Rev (107 aa).

A phosphoserine; by host CK2 mark is found at Ser5 and Ser8. Positions Ile18 to Asn26 are homomultimerization. Disordered stretches follow at residues Asn26–Arg50 and Asn82–Pro107. A Nuclear localization signal and RNA-binding (RRE) motif is present at residues Thr34 to Arg50. Residues Gln36–Arg50 are compositionally biased toward basic residues. A Nuclear export signal and binding to XPO1 motif is present at residues Phe73–Asn84. A compositionally biased stretch (low complexity) spans Ser86–Thr101. Ser92 carries the phosphoserine; by host modification.

It belongs to the HIV-1 REV protein family. Homomultimer; when bound to the RRE. Multimeric assembly is essential for activity and may involve XPO1. Binds to human KPNB1, XPO1, TNPO1, RANBP5 and IPO7. Interacts with the viral Integrase. Interacts with human KHDRBS1. Interacts with human NAP1; this interaction decreases Rev multimerization and stimulates its activity. Interacts with human DEAD-box helicases DDX3 and DDX24; these interactions may serve for viral RNA export to the cytoplasm and packaging, respectively. Interacts with human PSIP1; this interaction may inhibit HIV-1 DNA integration by promoting dissociation of the Integrase-LEDGF/p75 complex. In terms of processing, asymmetrically arginine dimethylated at one site by host PRMT6. Methylation impairs the RNA-binding activity and export of viral RNA from the nucleus to the cytoplasm. Post-translationally, phosphorylated by protein kinase CK2. Presence of, and maybe binding to the N-terminus of the regulatory beta subunit of CK2 is necessary for CK2-mediated Rev's phosphorylation.

The protein localises to the host nucleus. Its subcellular location is the host nucleolus. It localises to the host cytoplasm. Functionally, escorts unspliced or incompletely spliced viral pre-mRNAs (late transcripts) out of the nucleus of infected cells. These pre-mRNAs carry a recognition sequence called Rev responsive element (RRE) located in the env gene, that is not present in fully spliced viral mRNAs (early transcripts). This function is essential since most viral proteins are translated from unspliced or partially spliced pre-mRNAs which cannot exit the nucleus by the pathway used by fully processed cellular mRNAs. Rev itself is translated from a fully spliced mRNA that readily exits the nucleus. Rev's nuclear localization signal (NLS) binds directly to KPNB1/Importin beta-1 without previous binding to KPNA1/Importin alpha-1. KPNB1 binds to the GDP bound form of RAN (Ran-GDP) and targets Rev to the nucleus. In the nucleus, the conversion from Ran-GDP to Ran-GTP dissociates Rev from KPNB1 and allows Rev's binding to the RRE in viral pre-mRNAs. Rev multimerization on the RRE via cooperative assembly exposes its nuclear export signal (NES) to the surface. Rev can then form a complex with XPO1/CRM1 and Ran-GTP, leading to nuclear export of the complex. Conversion from Ran-GTP to Ran-GDP mediates dissociation of the Rev/RRE/XPO1/RAN complex, so that Rev can return to the nucleus for a subsequent round of export. Beside KPNB1, also seems to interact with TNPO1/Transportin-1, RANBP5/IPO5 and IPO7/RANBP7 for nuclear import. The nucleoporin-like HRB/RIP is an essential cofactor that probably indirectly interacts with Rev to release HIV RNAs from the perinuclear region to the cytoplasm. The sequence is that of Protein Rev from Human immunodeficiency virus type 1 group M subtype C (isolate 92BR025) (HIV-1).